We begin with the raw amino-acid sequence, 1441 residues long: Lysophospholipase NTE1 (1441 aa).

Residues 1-22 (MWLTSYVLPRLKNILLLQFHIT) are Lumenal-facing. The helical transmembrane segment at 23–43 (LPLNYLVLLLLSTVIITYLFL) threads the bilayer. Topologically, residues 44 to 1441 (RTRILSNYSQ…ENMLQRRNSI (1398 aa)) are cytoplasmic. Disordered stretches follow at residues 154–173 (SNPS…PSND), 210–236 (THLN…TGEI), 376–445 (QDDT…NSSS), and 551–585 (NRTG…HFRN). A compositionally biased stretch (polar residues) spans 376 to 388 (QDDTGSSASTIQK). Positions 572 to 585 (SRTDRSESFDHFRN) are enriched in basic and acidic residues. A nucleoside 3',5'-cyclic phosphate contacts are provided by residues 592–718 (NQFS…LTNS) and 707–836 (IYLK…VAKK). Residues 1137–1301 (LVLGGGGARG…VDNLPVTEMT (165 aa)) enclose the PNPLA domain. The GXGXXG motif lies at 1141 to 1146 (GGGARG). The GXSXG motif lies at 1168–1172 (GTSIG). Residue S1170 is the Nucleophile of the active site. D1288 (proton acceptor) is an active-site residue. Positions 1288–1290 (DGG) match the DGA/G motif.

This sequence belongs to the NTE family.

It localises to the endoplasmic reticulum membrane. It carries out the reaction a 1-acyl-sn-glycero-3-phosphocholine + H2O = sn-glycerol 3-phosphocholine + a fatty acid + H(+). Inhibited by organophosphorus esters. Intracellular phospholipase B that catalyzes the double deacylation of phosphatidylcholine (PC) to glycerophosphocholine (GroPCho). Plays an important role in membrane lipid homeostasis. Responsible for the rapid PC turnover in response to inositol, elevated temperatures, or when choline is present in the growth medium. This is Lysophospholipase NTE1 (NTE1) from Kluyveromyces lactis (strain ATCC 8585 / CBS 2359 / DSM 70799 / NBRC 1267 / NRRL Y-1140 / WM37) (Yeast).